A 1011-amino-acid polypeptide reads, in one-letter code: Multiple C2 domain and transmembrane region protein 7 (1011 aa).

Residues 1–110 (MMMSNLKLGV…PHSDAVVLHF (110 aa)) enclose the C2 1 domain. The segment covering 178-195 (QEHQHQHPQGPNQSSSLA) has biased composition (polar residues). The tract at residues 178–201 (QEHQHQHPQGPNQSSSLAAEQDNH) is disordered. C2 domains are found at residues 261–381 (IHKD…PQWY), 421–546 (VDCS…ARWY), and 587–709 (YSSD…THSY). Asp-294, Asp-300, Asp-347, Asp-349, and Asp-354 together coordinate Ca(2+). The next 3 membrane-spanning stretches (helical) occupy residues 812 to 832 (MMTVFSGVIAVGKWFSDICSW), 846 to 866 (LMLVCLPELILPTMFLYMFLI), and 954 to 974 (IFVILCFIAAIVFFITPIQIV).

Belongs to the MCTP family. The cofactor is Ca(2+). In terms of tissue distribution, accumulates specifically in hydathodes. Restricted the basal meristem of roots. Observed in flowers.

It localises to the membrane. The protein localises to the vesicle. It is found in the endosome membrane. Functionally, may function as a signaling molecule by regulating the trafficking of other regulators. This chain is Multiple C2 domain and transmembrane region protein 7, found in Arabidopsis thaliana (Mouse-ear cress).